The chain runs to 372 residues: Bifunctional coenzyme PQQ synthesis protein C/D (372 aa).

The interval 1-267 (MTAQFPPPVP…VAETNSAEDS (267 aa)) is pqqC. Residues 260-288 (ETNSAEDSPAAAASPAATTAEPTAFSGSD) form a disordered region. Over residues 264–283 (AEDSPAAAASPAATTAEPTA) the composition is skewed to low complexity. The interval 268-280 (PAAAASPAATTAE) is linker. Positions 281–372 (PTAFSGSDVP…GLAQKRVLER (92 aa)) are pqqD.

In the N-terminal section; belongs to the PqqC family. This sequence in the C-terminal section; belongs to the PqqD family. In terms of assembly, monomer. Interacts with PqqE.

It carries out the reaction 6-(2-amino-2-carboxyethyl)-7,8-dioxo-1,2,3,4,7,8-hexahydroquinoline-2,4-dicarboxylate + 3 O2 = pyrroloquinoline quinone + 2 H2O2 + 2 H2O + H(+). It participates in cofactor biosynthesis; pyrroloquinoline quinone biosynthesis. In terms of biological role, the PqqC region is involved in ring cyclization and eight-electron oxidation of 3a-(2-amino-2-carboxyethyl)-4,5-dioxo-4,5,6,7,8,9-hexahydroquinoline-7,9-dicarboxylic-acid to PQQ. Functionally, the PqqD region functions as a PqqA binding domain and presents PqqA to PqqE. The protein is Bifunctional coenzyme PQQ synthesis protein C/D (pqqCD) of Methylorubrum extorquens (strain ATCC 14718 / DSM 1338 / JCM 2805 / NCIMB 9133 / AM1) (Methylobacterium extorquens).